The chain runs to 372 residues: Glutamate 5-kinase (372 aa).

Lysine 14 serves as a coordination point for ATP. Substrate is bound by residues serine 54, aspartate 141, and asparagine 153. ATP is bound at residue 173–174 (TD). The PUA domain maps to 280 to 358 (RGTVVIDDGA…SQIESLLGYS (79 aa)).

It belongs to the glutamate 5-kinase family.

It is found in the cytoplasm. The catalysed reaction is L-glutamate + ATP = L-glutamyl 5-phosphate + ADP. It functions in the pathway amino-acid biosynthesis; L-proline biosynthesis; L-glutamate 5-semialdehyde from L-glutamate: step 1/2. Its function is as follows. Catalyzes the transfer of a phosphate group to glutamate to form L-glutamate 5-phosphate. This chain is Glutamate 5-kinase, found in Methylibium petroleiphilum (strain ATCC BAA-1232 / LMG 22953 / PM1).